A 514-amino-acid polypeptide reads, in one-letter code: Maltose/maltodextrin transport system permease protein MalF (514 aa).

Residues 1 to 16 are Cytoplasmic-facing; that stretch reads MDVIKKKHWWQSDALK. Residues 17–36 traverse the membrane as a helical segment; that stretch reads WSVLGLLGLLVGYLVVLMYA. Topologically, residues 37–39 are periplasmic; it reads QGE. A helical membrane pass occupies residues 40 to 58; it reads YLFAITTLILSSAGLYIFA. Over 59 to 66 the chain is Cytoplasmic; sequence NRKAYAWR. Residues 67 to 92 form a helical membrane-spanning segment; that stretch reads YVYPGMAGMGLFVLFPLVCTIAIAFT. Over 93–275 the chain is Periplasmic; the sequence is NYSSTNQLTF…RVFTDEGIQK (183 aa). Residues 276 to 306 traverse the membrane as a helical segment; that stretch reads PFLAIFVWTVVFSLITVFLTVAVGMVLACLV. One can recognise an ABC transmembrane type-1 domain in the interval 281 to 505; it reads FVWTVVFSLI…LLVGALAIVN (225 aa). Residues 307–318 lie on the Cytoplasmic side of the membrane; sequence QWEALRGKAVYR. The chain crosses the membrane as a helical span at residues 319 to 336; sequence VLLILPYAVPSFISILIF. The Periplasmic segment spans residues 337 to 369; sequence KGLFNQSFGEINMMLSALFGVKPAWFSDPTTAR. The helical transmembrane segment at 370–392 threads the bilayer; sequence TMLIIVNTWLGYPYMMILCMGLL. Over 393–425 the chain is Cytoplasmic; sequence KAIPDDLYEASAMDGAGPFQNFFKITLPLLIKP. The chain crosses the membrane as a helical span at residues 426-452; that stretch reads LTPLMIASFAFNFNNFVLIQLLTNGGP. At 453 to 483 the chain is on the periplasmic side; that stretch reads DRLGTTTPAGYTDLLVNYTYRIAFEGGGGQD. Residues 484 to 505 traverse the membrane as a helical segment; the sequence is FGLAAAIATLIFLLVGALAIVN. Residues 506–514 are Cytoplasmic-facing; sequence LKATRMKFD.

The protein belongs to the binding-protein-dependent transport system permease family. MalFG subfamily. The complex is composed of two ATP-binding proteins (MalK), two transmembrane proteins (MalG and MalF) and a solute-binding protein (MalE). Protein stability and stable complex formation require YidC.

Its subcellular location is the cell inner membrane. In terms of biological role, part of the ABC transporter complex MalEFGK involved in maltose/maltodextrin import. Probably responsible for the translocation of the substrate across the membrane. This Escherichia coli (strain K12) protein is Maltose/maltodextrin transport system permease protein MalF.